Consider the following 234-residue polypeptide: Large ribosomal subunit protein uL1 (234 aa).

This sequence belongs to the universal ribosomal protein uL1 family. In terms of assembly, part of the 50S ribosomal subunit.

Binds directly to 23S rRNA. The L1 stalk is quite mobile in the ribosome, and is involved in E site tRNA release. Functionally, protein L1 is also a translational repressor protein, it controls the translation of the L11 operon by binding to its mRNA. The sequence is that of Large ribosomal subunit protein uL1 from Escherichia coli (strain 55989 / EAEC).